Consider the following 66-residue polypeptide: Large ribosomal subunit protein uL29 (66 aa).

The protein belongs to the universal ribosomal protein uL29 family.

In Borrelia hermsii (strain HS1 / DAH), this protein is Large ribosomal subunit protein uL29.